A 127-amino-acid polypeptide reads, in one-letter code: MIVVDASAALAALLNDGQARQLIAAERLHVPHLVDSEIASGLRRLAQRDRLGAADGRRALQTWRRLAVTRYPVVGLFERIWEIRANLSAYDASYVALAEALNCALVTADLRLSDTGQAQCPITVVPR.

One can recognise a PINc domain in the interval 2-115; it reads IVVDASAALA…VTADLRLSDT (114 aa). Mg(2+) contacts are provided by aspartate 5 and aspartate 91.

Belongs to the PINc/VapC protein family. Mg(2+) is required as a cofactor.

Its function is as follows. Toxic component of a type II toxin-antitoxin (TA) system. An RNase. The cognate antitoxin is VapB9. This chain is Ribonuclease VapC9, found in Mycobacterium tuberculosis (strain CDC 1551 / Oshkosh).